The following is a 156-amino-acid chain: Small ribosomal subunit protein uS7 (156 aa).

Belongs to the universal ribosomal protein uS7 family. In terms of assembly, part of the 30S ribosomal subunit. Contacts proteins S9 and S11.

Functionally, one of the primary rRNA binding proteins, it binds directly to 16S rRNA where it nucleates assembly of the head domain of the 30S subunit. Is located at the subunit interface close to the decoding center, probably blocks exit of the E-site tRNA. The protein is Small ribosomal subunit protein uS7 of Anoxybacillus flavithermus (strain DSM 21510 / WK1).